A 266-amino-acid polypeptide reads, in one-letter code: Small ribosomal subunit protein mS42 (266 aa).

The protein belongs to the mitochondrion-specific ribosomal protein mS42 family. In terms of assembly, component of the mitochondrial small ribosomal subunit (mt-SSU). Mature yeast 74S mitochondrial ribosomes consist of a small (37S) and a large (54S) subunit. The 37S small subunit contains a 15S ribosomal RNA (15S mt-rRNA) and 34 different proteins. The 54S large subunit contains a 21S rRNA (21S mt-rRNA) and 46 different proteins. mS42 forms a heterodimer with mS43, building a large protuberance adjacent to the mRNA channel exit in the mt-SSU body.

The protein localises to the mitochondrion. Its function is as follows. Component of the mitochondrial ribosome (mitoribosome), a dedicated translation machinery responsible for the synthesis of mitochondrial genome-encoded proteins, including at least some of the essential transmembrane subunits of the mitochondrial respiratory chain. The mitoribosomes are attached to the mitochondrial inner membrane and translation products are cotranslationally integrated into the membrane. The protein is Small ribosomal subunit protein mS42 (RSM26) of Saccharomyces cerevisiae (strain ATCC 204508 / S288c) (Baker's yeast).